A 332-amino-acid chain; its full sequence is rRNA biogenesis protein rrp-36 (332 aa).

Disordered regions lie at residues Met-1–Leu-91, Gly-104–Ser-196, Ser-243–Ser-262, and Lys-312–Arg-332. Acidic residues-rich tracts occupy residues Glu-27 to Gly-45, Asp-53 to Ala-77, and Glu-117 to Glu-127. 2 stretches are compositionally biased toward basic and acidic residues: residues Glu-128 to Lys-142 and Arg-165 to Arg-183. Residues Asp-212–Gln-274 adopt a coiled-coil conformation. Residues Ala-315 to Arg-332 show a composition bias toward basic and acidic residues.

This sequence belongs to the RRP36 family. Associates with 90S and pre-40S pre-ribosomal particles.

It is found in the nucleus. The protein localises to the nucleolus. Its function is as follows. Component of the 90S pre-ribosome involved in the maturation of rRNAs. Required for early cleavages of the pre-RNAs in the 40S ribosomal subunit maturation pathway. The sequence is that of rRNA biogenesis protein rrp-36 (rrp-36) from Neurospora crassa (strain ATCC 24698 / 74-OR23-1A / CBS 708.71 / DSM 1257 / FGSC 987).